The following is a 170-amino-acid chain: Adenine phosphoribosyltransferase (170 aa).

This sequence belongs to the purine/pyrimidine phosphoribosyltransferase family. In terms of assembly, homodimer.

The protein resides in the cytoplasm. The catalysed reaction is AMP + diphosphate = 5-phospho-alpha-D-ribose 1-diphosphate + adenine. It functions in the pathway purine metabolism; AMP biosynthesis via salvage pathway; AMP from adenine: step 1/1. Its function is as follows. Catalyzes a salvage reaction resulting in the formation of AMP, that is energically less costly than de novo synthesis. The polypeptide is Adenine phosphoribosyltransferase (Symbiobacterium thermophilum (strain DSM 24528 / JCM 14929 / IAM 14863 / T)).